The chain runs to 331 residues: MIRSATLPFASALPSLPDNHRLRLFSGSSNSALSQEVSRYLGIDLGPMIRKRFADGELYVQIQESIRGCDVYLMQPTCWPVNDHLMELLIMIDACRRASARQITAVLPYYGYARADRKTAGRESITAKLVANLITQAGANRVLAMDLHSAQIQGYFDIPFDHVYGSPVLIDYLRSKNLADLVVVSPDVGGVARARAFAKKLDDAPLAIIDKRRQAHNVAEVLNVIGDVQGKTAVLVDDMIDTAGTICEGARLLRKQGASQVYACATHAVFSPPAIERLSASGLFEEVIVTNTIPIPEENRFPQLTILSVANLLGETIWRIHEESSVSSMFR.

An ATP-binding site is contributed by 55-57; that stretch reads DGE. Mg(2+)-binding residues include H148 and D187. K211 is an active-site residue. D-ribose 5-phosphate-binding positions include R213, D237, and 241–245; that span reads DTAGT.

Belongs to the ribose-phosphate pyrophosphokinase family. Class I subfamily. Homohexamer. Mg(2+) serves as cofactor.

The protein resides in the cytoplasm. The enzyme catalyses D-ribose 5-phosphate + ATP = 5-phospho-alpha-D-ribose 1-diphosphate + AMP + H(+). The protein operates within metabolic intermediate biosynthesis; 5-phospho-alpha-D-ribose 1-diphosphate biosynthesis; 5-phospho-alpha-D-ribose 1-diphosphate from D-ribose 5-phosphate (route I): step 1/1. In terms of biological role, involved in the biosynthesis of the central metabolite phospho-alpha-D-ribosyl-1-pyrophosphate (PRPP) via the transfer of pyrophosphoryl group from ATP to 1-hydroxyl of ribose-5-phosphate (Rib-5-P). In Synechococcus elongatus (strain ATCC 33912 / PCC 7942 / FACHB-805) (Anacystis nidulans R2), this protein is Ribose-phosphate pyrophosphokinase.